The primary structure comprises 189 residues: Large ribosomal subunit protein bL25 (189 aa).

Belongs to the bacterial ribosomal protein bL25 family. CTC subfamily. In terms of assembly, part of the 50S ribosomal subunit; part of the 5S rRNA/L5/L18/L25 subcomplex. Contacts the 5S rRNA. Binds to the 5S rRNA independently of L5 and L18.

Functionally, this is one of the proteins that binds to the 5S RNA in the ribosome where it forms part of the central protuberance. In Azobacteroides pseudotrichonymphae genomovar. CFP2, this protein is Large ribosomal subunit protein bL25.